We begin with the raw amino-acid sequence, 150 residues long: MRVVIQRVSHASVTIEGVCKSAIKEGFMILVGIEEADTQEDADWLCKKIIGLRVFDDENGVMNKSILEVGGNILVISQFTLHASTKKGNRPSYIRAAKHDVAIPLYNYFCQELSIGLGKEVGTGEFGADMKVELLNNGPVTICMDTKNKE.

The Gly-cisPro motif, important for rejection of L-amino acids signature appears at 138–139 (GP).

The protein belongs to the DTD family. As to quaternary structure, homodimer.

Its subcellular location is the cytoplasm. It catalyses the reaction glycyl-tRNA(Ala) + H2O = tRNA(Ala) + glycine + H(+). The enzyme catalyses a D-aminoacyl-tRNA + H2O = a tRNA + a D-alpha-amino acid + H(+). An aminoacyl-tRNA editing enzyme that deacylates mischarged D-aminoacyl-tRNAs. Also deacylates mischarged glycyl-tRNA(Ala), protecting cells against glycine mischarging by AlaRS. Acts via tRNA-based rather than protein-based catalysis; rejects L-amino acids rather than detecting D-amino acids in the active site. By recycling D-aminoacyl-tRNA to D-amino acids and free tRNA molecules, this enzyme counteracts the toxicity associated with the formation of D-aminoacyl-tRNA entities in vivo and helps enforce protein L-homochirality. This Phocaeicola vulgatus (strain ATCC 8482 / DSM 1447 / JCM 5826 / CCUG 4940 / NBRC 14291 / NCTC 11154) (Bacteroides vulgatus) protein is D-aminoacyl-tRNA deacylase.